A 168-amino-acid polypeptide reads, in one-letter code: Crossover junction endodeoxyribonuclease RuvC (168 aa).

Catalysis depends on residues Asp-7, Glu-64, and Asp-136. Residues Asp-7, Glu-64, and Asp-136 each contribute to the Mg(2+) site.

The protein belongs to the RuvC family. Homodimer which binds Holliday junction (HJ) DNA. The HJ becomes 2-fold symmetrical on binding to RuvC with unstacked arms; it has a different conformation from HJ DNA in complex with RuvA. In the full resolvosome a probable DNA-RuvA(4)-RuvB(12)-RuvC(2) complex forms which resolves the HJ. Mg(2+) is required as a cofactor.

The protein localises to the cytoplasm. The catalysed reaction is Endonucleolytic cleavage at a junction such as a reciprocal single-stranded crossover between two homologous DNA duplexes (Holliday junction).. The RuvA-RuvB-RuvC complex processes Holliday junction (HJ) DNA during genetic recombination and DNA repair. Endonuclease that resolves HJ intermediates. Cleaves cruciform DNA by making single-stranded nicks across the HJ at symmetrical positions within the homologous arms, yielding a 5'-phosphate and a 3'-hydroxyl group; requires a central core of homology in the junction. The consensus cleavage sequence is 5'-(A/T)TT(C/G)-3'. Cleavage occurs on the 3'-side of the TT dinucleotide at the point of strand exchange. HJ branch migration catalyzed by RuvA-RuvB allows RuvC to scan DNA until it finds its consensus sequence, where it cleaves and resolves the cruciform DNA. The protein is Crossover junction endodeoxyribonuclease RuvC of Polynucleobacter necessarius subsp. necessarius (strain STIR1).